A 154-amino-acid polypeptide reads, in one-letter code: Iron-sulfur cluster assembly 2 homolog, mitochondrial (154 aa).

A mitochondrion-targeting transit peptide spans 1-8; that stretch reads MAASRALS. Fe cation is bound by residues Cys79, Cys144, and Cys146.

The protein belongs to the HesB/IscA family. As to quaternary structure, heterotetramer; forms a dimer of dimers with IBA57. Interacts with [2Fe-2S]-ISCA2 forming the heterodimer [2Fe- 2S]-ISCA2-IBA57 complex; [2Fe-2S] cluster binding is absolutely required to promote the complex formation.

Its subcellular location is the mitochondrion. Its function is as follows. Involved in the maturation of mitochondrial 4Fe-4S proteins functioning late in the iron-sulfur cluster assembly pathway. May be involved in the binding of an intermediate of Fe/S cluster assembly. This Mus musculus (Mouse) protein is Iron-sulfur cluster assembly 2 homolog, mitochondrial (Isca2).